The chain runs to 643 residues: Carboxy-terminal kinesin 2 (643 aa).

Disordered stretches follow at residues 1–42 and 81–101; these read MDST…SSLE and MRPK…KTKV. The globular stretch occupies residues 1-116; it reads MDSTDKKVQV…QPAAIGAEKK (116 aa). Positions 88–101 are enriched in polar residues; it reads PGITSTSFSGKTKV. A coiled-coil region spans residues 117–296; it reads KRAAWDLKGQ…LVQELKGNIR (180 aa). The Kinesin motor domain maps to 294–633; sequence NIRVFCRVRP…LRFASKVNEC (340 aa). Residue 386 to 393 participates in ATP binding; that stretch reads GQTGSGKT.

It belongs to the TRAFAC class myosin-kinesin ATPase superfamily. Kinesin family. NCD subfamily.

It localises to the cytoplasm. The protein localises to the cytoskeleton. Promotes mitotic spindle assembly. The sequence is that of Carboxy-terminal kinesin 2 from Xenopus laevis (African clawed frog).